The following is a 512-amino-acid chain: Glycerol kinase 2 (512 aa).

Position 18 (Thr-18) interacts with ADP. 3 residues coordinate ATP: Thr-18, Thr-19, and Ser-20. Thr-18 contacts sn-glycerol 3-phosphate. Arg-22 serves as a coordination point for ADP. Sn-glycerol 3-phosphate contacts are provided by Arg-88, Glu-89, Tyr-140, and Asp-255. Residues Arg-88, Glu-89, Tyr-140, Asp-255, and Gln-256 each coordinate glycerol. 2 residues coordinate ADP: Thr-277 and Gly-321. 4 residues coordinate ATP: Thr-277, Gly-321, Gln-325, and Gly-422. ADP is bound by residues Gly-422 and Asn-426.

It belongs to the FGGY kinase family.

It carries out the reaction glycerol + ATP = sn-glycerol 3-phosphate + ADP + H(+). It participates in polyol metabolism; glycerol degradation via glycerol kinase pathway; sn-glycerol 3-phosphate from glycerol: step 1/1. With respect to regulation, inhibited by fructose 1,6-bisphosphate (FBP). Key enzyme in the regulation of glycerol uptake and metabolism. Catalyzes the phosphorylation of glycerol to yield sn-glycerol 3-phosphate. The chain is Glycerol kinase 2 from Streptomyces coelicolor (strain ATCC BAA-471 / A3(2) / M145).